We begin with the raw amino-acid sequence, 311 residues long: tRNA-cytidine(32) 2-sulfurtransferase (311 aa).

The PP-loop motif signature appears at 47–52 (SGGKDS). Cys-122, Cys-125, and Cys-213 together coordinate [4Fe-4S] cluster.

This sequence belongs to the TtcA family. As to quaternary structure, homodimer. The cofactor is Mg(2+). Requires [4Fe-4S] cluster as cofactor.

Its subcellular location is the cytoplasm. It carries out the reaction cytidine(32) in tRNA + S-sulfanyl-L-cysteinyl-[cysteine desulfurase] + AH2 + ATP = 2-thiocytidine(32) in tRNA + L-cysteinyl-[cysteine desulfurase] + A + AMP + diphosphate + H(+). It functions in the pathway tRNA modification. In terms of biological role, catalyzes the ATP-dependent 2-thiolation of cytidine in position 32 of tRNA, to form 2-thiocytidine (s(2)C32). The sulfur atoms are provided by the cysteine/cysteine desulfurase (IscS) system. This Pectobacterium carotovorum subsp. carotovorum (strain PC1) protein is tRNA-cytidine(32) 2-sulfurtransferase.